Here is a 397-residue protein sequence, read N- to C-terminus: MYGLEMLEKIKLEYDKWACLTPKNSLYDRTLVWLFLSLLMIGFIMVTSASIPVSTRLNNDPFHFAIRDSIYLACSLLAFAFVVKIPMRNWEKYNVPLFLLSLLFLASVLIFGRSVNGSIRWIQLGPINFQPAELSKLAIICYFSSFYVRKYDEMRNRSASVIRPMVILFLFSSLLLLQPDLGSVVVLFVLTFTMLFIMGAKVMQFLLLIVTASVSFILLVLTSEYRLKRVTSFLDPFADAYGDGFQLSNAQMAFGQGQLWGQGLGNSVQKLEYLPEAHTDFVMAVVAEEFGFIGIIFMVVLLLCLSFRAIKISRDALKLEARFRGFFAFGVAIWVFLQGSVNLGVASGALPTKGLTFPLVSYGGSSLVIMSVAIAILLRIDYENRLTRVGHAQIKEP.

Over 1–30 the chain is Cytoplasmic; it reads MYGLEMLEKIKLEYDKWACLTPKNSLYDRT. The helical transmembrane segment at 31–51 threads the bilayer; sequence LVWLFLSLLMIGFIMVTSASI. Residues 52–61 lie on the Periplasmic side of the membrane; sequence PVSTRLNNDP. A helical transmembrane segment spans residues 62–82; sequence FHFAIRDSIYLACSLLAFAFV. Residues 83–94 are Cytoplasmic-facing; the sequence is VKIPMRNWEKYN. A helical transmembrane segment spans residues 95-115; sequence VPLFLLSLLFLASVLIFGRSV. The Periplasmic portion of the chain corresponds to 116–126; sequence NGSIRWIQLGP. A helical transmembrane segment spans residues 127–146; it reads INFQPAELSKLAIICYFSSF. Residues 147–158 lie on the Cytoplasmic side of the membrane; the sequence is YVRKYDEMRNRS. 2 helical membrane passes run 159–179 and 180–200; these read ASVI…LLQP and DLGS…IMGA. Residue Lys201 is a topological domain, cytoplasmic. The helical transmembrane segment at 202-222 threads the bilayer; it reads VMQFLLLIVTASVSFILLVLT. Topologically, residues 223–280 are periplasmic; the sequence is SEYRLKRVTSFLDPFADAYGDGFQLSNAQMAFGQGQLWGQGLGNSVQKLEYLPEAHTD. Residues 281–301 form a helical membrane-spanning segment; that stretch reads FVMAVVAEEFGFIGIIFMVVL. At 302–325 the chain is on the cytoplasmic side; sequence LLCLSFRAIKISRDALKLEARFRG. Residues 326–346 traverse the membrane as a helical segment; it reads FFAFGVAIWVFLQGSVNLGVA. Residues 347 to 356 lie on the Periplasmic side of the membrane; that stretch reads SGALPTKGLT. Residues 357-377 traverse the membrane as a helical segment; the sequence is FPLVSYGGSSLVIMSVAIAIL. Over 378 to 397 the chain is Cytoplasmic; sequence LRIDYENRLTRVGHAQIKEP.

This sequence belongs to the SEDS family. FtsW subfamily.

It localises to the cell inner membrane. It carries out the reaction [GlcNAc-(1-&gt;4)-Mur2Ac(oyl-L-Ala-gamma-D-Glu-L-Lys-D-Ala-D-Ala)](n)-di-trans,octa-cis-undecaprenyl diphosphate + beta-D-GlcNAc-(1-&gt;4)-Mur2Ac(oyl-L-Ala-gamma-D-Glu-L-Lys-D-Ala-D-Ala)-di-trans,octa-cis-undecaprenyl diphosphate = [GlcNAc-(1-&gt;4)-Mur2Ac(oyl-L-Ala-gamma-D-Glu-L-Lys-D-Ala-D-Ala)](n+1)-di-trans,octa-cis-undecaprenyl diphosphate + di-trans,octa-cis-undecaprenyl diphosphate + H(+). The protein operates within cell wall biogenesis; peptidoglycan biosynthesis. In terms of biological role, peptidoglycan polymerase that is essential for cell division. The polypeptide is Probable peptidoglycan glycosyltransferase FtsW (Haemophilus ducreyi (strain 35000HP / ATCC 700724)).